A 273-amino-acid polypeptide reads, in one-letter code: 4-hydroxy-tetrahydrodipicolinate reductase (273 aa).

NAD(+)-binding positions include 8–13, E34, 102–104, and 128–131; these read GCAGNM, GTT, and SPNM. H161 functions as the Proton donor/acceptor in the catalytic mechanism. H162 provides a ligand contact to (S)-2,3,4,5-tetrahydrodipicolinate. The active-site Proton donor is K165. 171-172 contacts (S)-2,3,4,5-tetrahydrodipicolinate; that stretch reads GT.

It belongs to the DapB family.

The protein localises to the cytoplasm. The catalysed reaction is (S)-2,3,4,5-tetrahydrodipicolinate + NAD(+) + H2O = (2S,4S)-4-hydroxy-2,3,4,5-tetrahydrodipicolinate + NADH + H(+). It carries out the reaction (S)-2,3,4,5-tetrahydrodipicolinate + NADP(+) + H2O = (2S,4S)-4-hydroxy-2,3,4,5-tetrahydrodipicolinate + NADPH + H(+). The protein operates within amino-acid biosynthesis; L-lysine biosynthesis via DAP pathway; (S)-tetrahydrodipicolinate from L-aspartate: step 4/4. In terms of biological role, catalyzes the conversion of 4-hydroxy-tetrahydrodipicolinate (HTPA) to tetrahydrodipicolinate. This chain is 4-hydroxy-tetrahydrodipicolinate reductase, found in Methanosphaera stadtmanae (strain ATCC 43021 / DSM 3091 / JCM 11832 / MCB-3).